The following is a 330-amino-acid chain: ADP-L-glycero-D-manno-heptose-6-epimerase (330 aa).

Residues 11–12 (FI), 32–33 (DN), Lys-39, Lys-54, 75–79 (EGACS), and Asn-92 contribute to the NADP(+) site. Tyr-139 serves as the catalytic Proton acceptor. An NADP(+)-binding site is contributed by Lys-143. Substrate is bound at residue Asn-168. Val-169 and Lys-177 together coordinate NADP(+). Lys-177 (proton acceptor) is an active-site residue. Substrate is bound by residues Arg-179, His-186, 200–203 (FGEY), Arg-213, and Tyr-292.

This sequence belongs to the NAD(P)-dependent epimerase/dehydratase family. HldD subfamily. In terms of assembly, homopentamer. It depends on NADP(+) as a cofactor.

The enzyme catalyses ADP-D-glycero-beta-D-manno-heptose = ADP-L-glycero-beta-D-manno-heptose. It functions in the pathway nucleotide-sugar biosynthesis; ADP-L-glycero-beta-D-manno-heptose biosynthesis; ADP-L-glycero-beta-D-manno-heptose from D-glycero-beta-D-manno-heptose 7-phosphate: step 4/4. Catalyzes the interconversion between ADP-D-glycero-beta-D-manno-heptose and ADP-L-glycero-beta-D-manno-heptose via an epimerization at carbon 6 of the heptose. The protein is ADP-L-glycero-D-manno-heptose-6-epimerase of Burkholderia ambifaria (strain MC40-6).